The sequence spans 654 residues: Cytochrome B pre-mRNA-processing protein 1 (654 aa).

The protein resides in the mitochondrion. Its function is as follows. Responsible for conferring a stable 5'-end on cytochrome b mRNA. This chain is Cytochrome B pre-mRNA-processing protein 1 (CBP1), found in Saccharomyces cerevisiae (strain ATCC 204508 / S288c) (Baker's yeast).